Here is a 394-residue protein sequence, read N- to C-terminus: Phosphopentomutase (394 aa).

Mn(2+)-binding residues include Asp14, Asp287, His292, Asp328, His329, and His340.

This sequence belongs to the phosphopentomutase family. Mn(2+) is required as a cofactor.

It is found in the cytoplasm. The catalysed reaction is 2-deoxy-alpha-D-ribose 1-phosphate = 2-deoxy-D-ribose 5-phosphate. It carries out the reaction alpha-D-ribose 1-phosphate = D-ribose 5-phosphate. It participates in carbohydrate degradation; 2-deoxy-D-ribose 1-phosphate degradation; D-glyceraldehyde 3-phosphate and acetaldehyde from 2-deoxy-alpha-D-ribose 1-phosphate: step 1/2. In terms of biological role, isomerase that catalyzes the conversion of deoxy-ribose 1-phosphate (dRib-1-P) and ribose 1-phosphate (Rib-1-P) to deoxy-ribose 5-phosphate (dRib-5-P) and ribose 5-phosphate (Rib-5-P), respectively. This Shouchella clausii (strain KSM-K16) (Alkalihalobacillus clausii) protein is Phosphopentomutase.